We begin with the raw amino-acid sequence, 178 residues long: MVNAEDLFINLAKSLLGDDVIDVLRVLLEKGTEMTDEEIANQLNIKVNDVRKKLNLLEEQGFVSYRKTRDKDSGWFIYYWKPNIDQINEILLNRKRLILDKLKSRLEYEKNNTFFICPQDNSRYSFEEAFENEFKCLKCGSQLTYYDTEKIKSFLEQKIRQIEEEIDKETKLGANKSH.

Residues 4–88 (AEDLFINLAK…YWKPNIDQIN (85 aa)) enclose the HTH TFE/IIEalpha-type domain.

The protein belongs to the TFE family. In terms of assembly, monomer. Interaction with RNA polymerase subunits RpoF and RpoE is necessary for Tfe stimulatory transcription activity. Able to interact with Tbp and RNA polymerase in the absence of DNA promoter. Interacts both with the preinitiation and elongation complexes.

In terms of biological role, transcription factor that plays a role in the activation of archaeal genes transcribed by RNA polymerase. Facilitates transcription initiation by enhancing TATA-box recognition by TATA-box-binding protein (Tbp), and transcription factor B (Tfb) and RNA polymerase recruitment. Not absolutely required for transcription in vitro, but particularly important in cases where Tbp or Tfb function is not optimal. It dynamically alters the nucleic acid-binding properties of RNA polymerases by stabilizing the initiation complex and destabilizing elongation complexes. Seems to translocate with the RNA polymerase following initiation and acts by binding to the non template strand of the transcription bubble in elongation complexes. This chain is Transcription factor E, found in Saccharolobus islandicus (strain L.S.2.15 / Lassen #1) (Sulfolobus islandicus).